Reading from the N-terminus, the 374-residue chain is S-adenosylmethionine synthase 2 (374 aa).

A Mg(2+)-binding site is contributed by glutamate 11. Residue histidine 17 coordinates ATP. Glutamate 45 contributes to the K(+) binding site. 2 residues coordinate L-methionine: glutamate 58 and glutamine 101. Residues 169–171, 237–240, aspartate 248, 254–255, alanine 271, lysine 275, and lysine 279 each bind ATP; these read DGK, SGRF, and RK. Position 248 (aspartate 248) interacts with L-methionine. Residue lysine 279 coordinates L-methionine.

Belongs to the AdoMet synthase family. In terms of assembly, homotetramer. It depends on Mn(2+) as a cofactor. Mg(2+) is required as a cofactor. Co(2+) serves as cofactor. The cofactor is K(+). In terms of tissue distribution, expressed in vegetative and reproductive tissues.

It is found in the cytoplasm. It catalyses the reaction L-methionine + ATP + H2O = S-adenosyl-L-methionine + phosphate + diphosphate. Its pathway is amino-acid biosynthesis; S-adenosyl-L-methionine biosynthesis; S-adenosyl-L-methionine from L-methionine: step 1/1. Catalyzes the formation of S-adenosylmethionine from methionine and ATP. The reaction comprises two steps that are both catalyzed by the same enzyme: formation of S-adenosylmethionine (AdoMet) and triphosphate, and subsequent hydrolysis of the triphosphate. This is S-adenosylmethionine synthase 2 (SAMS2) from Pisum sativum (Garden pea).